A 134-amino-acid chain; its full sequence is Holo-[acyl-carrier-protein] synthase (134 aa).

Residues D8 and E57 each coordinate Mg(2+).

Belongs to the P-Pant transferase superfamily. AcpS family. The cofactor is Mg(2+).

The protein resides in the cytoplasm. The catalysed reaction is apo-[ACP] + CoA = holo-[ACP] + adenosine 3',5'-bisphosphate + H(+). Functionally, transfers the 4'-phosphopantetheine moiety from coenzyme A to a Ser of acyl-carrier-protein. In Agrobacterium fabrum (strain C58 / ATCC 33970) (Agrobacterium tumefaciens (strain C58)), this protein is Holo-[acyl-carrier-protein] synthase.